Here is a 320-residue protein sequence, read N- to C-terminus: 3-ketodihydrosphingosine reductase TSC10 (320 aa).

Topologically, residues 1–254 (MKFTLEDQVV…IIAKSLARGD (254 aa)) are cytoplasmic. Leu11 lines the NADP(+) pocket. Positions 14, 16, and 18 each coordinate NADPH. The short motif at 14 to 18 (GGSQG) is the GXSXG element. Leu19 contributes to the NADP(+) binding site. 4 residues coordinate NADPH: Arg41, Arg45, Asp89, and Leu90. NADP(+) is bound at residue Asp89. The active-site Proton donor is the Ser166. Tyr180, Lys184, and Ser213 together coordinate NADP(+). Tyr180 serves as the catalytic Proton acceptor. Lys184 acts as the Lowers pKa of active site Tyr in catalysis. The helical transmembrane segment at 255 to 275 (DDVFTDFVGWMIMGMDLGLTA) threads the bilayer. Over 276 to 279 (KKSR) the chain is Lumenal. A helical transmembrane segment spans residues 280–300 (FVPLQWIFGVLSNILVVPFYM). At 301–320 (VGCSWYIRKWFRENDGKKAN) the chain is on the cytoplasmic side.

The protein belongs to the short-chain dehydrogenases/reductases (SDR) family. As to quaternary structure, dimer or tetramer.

The protein resides in the endoplasmic reticulum membrane. It carries out the reaction sphinganine + NADP(+) = 3-oxosphinganine + NADPH + H(+). The protein operates within lipid metabolism; sphingolipid metabolism. Catalyzes the reduction of 3'-oxosphinganine (3-ketodihydrosphingosine/KDS) to sphinganine (dihydrosphingosine/DHS), the second step of de novo sphingolipid biosynthesis. The sequence is that of 3-ketodihydrosphingosine reductase TSC10 from Saccharomyces cerevisiae (strain ATCC 204508 / S288c) (Baker's yeast).